A 479-amino-acid polypeptide reads, in one-letter code: FK506-binding protein 4 (479 aa).

Disordered regions lie at residues 39–106, 141–162, and 205–367; these read IDPD…ARKL, VKGK…EGLD, and GNYV…KTTG. Composition is skewed to acidic residues over residues 40–49, 68–93, 148–162, and 214–256; these read DPDEAPEFDD, LDEE…DEEV, TDDD…EGLD, and PRDD…DLDG. 3 stretches are compositionally biased toward basic and acidic residues: residues 272 to 299, 325 to 334, and 348 to 364; these read APKL…DKAK, AKPEQKETKK, and SKER…KAEK. The PPIase FKBP-type domain maps to 393-479; it reads GNTVAMRYIG…IFDVKLLEIK (87 aa).

The protein belongs to the FKBP-type PPIase family. FKBP3/4 subfamily. In terms of assembly, binds to histones H3 and H4.

Its subcellular location is the nucleus. It carries out the reaction [protein]-peptidylproline (omega=180) = [protein]-peptidylproline (omega=0). With respect to regulation, inhibited by both FK506 and rapamycin. Functionally, PPIase that acts as a histone chaperone. Histone proline isomerase that increases the rate of cis-trans isomerization at prolines on the histone H3 N-terminal tail. Proline isomerization influences H3 methylation thereby regulating gene expression. The sequence is that of FK506-binding protein 4 (fpr4) from Emericella nidulans (strain FGSC A4 / ATCC 38163 / CBS 112.46 / NRRL 194 / M139) (Aspergillus nidulans).